The primary structure comprises 505 residues: Protein disulfide-isomerase A3 (505 aa).

The first 24 residues, 1–24, serve as a signal peptide directing secretion; that stretch reads MRFSCLALLPGVALLLASALLASA. The Thioredoxin 1 domain occupies 25 to 133; the sequence is SDVLELTDEN…IVSHLKKQAG (109 aa). Residues Cys57 and Cys60 each act as nucleophile in the active site. The cysteines at positions 57 and 60 are disulfide-linked. Residue Lys61 is modified to N6-methyllysine. A disulfide bridge connects residues Cys85 and Cys92. N6-succinyllysine is present on Lys129. Position 152 is an N6-acetyllysine (Lys152). Residue Lys218 is modified to N6-succinyllysine. Lys252 is subject to N6-acetyllysine. Position 319 is a phosphothreonine (Thr319). Residues 343-485 form the Thioredoxin 2 domain; the sequence is SRDGKALERF…FISYLQREAT (143 aa). Lys362 carries the post-translational modification N6-acetyllysine. Residues Cys406 and Cys409 each act as nucleophile in the active site. An intrachain disulfide couples Cys406 to Cys409. A disordered region spans residues 484-505; that stretch reads ATNPPIIQEEKPKKKKKAQEDL. Basic and acidic residues predominate over residues 491 to 505; that stretch reads QEEKPKKKKKAQEDL. Residue Lys494 is modified to N6-acetyllysine. The Prevents secretion from ER signature appears at 502–505; it reads QEDL.

The protein belongs to the protein disulfide isomerase family. In terms of assembly, part of the major histocompatibility complex class I (MHC I) peptide loading complex composed of TAP1, TAP2, B2M, MHC heavy chain, TAPBP, PDIA3, and CALR. Interacts with ERP27 and CANX. Interacts with SERPINA2 and with SERPINA1. Interacts with ATP2A2. In terms of processing, within the major histocompatibility complex class I (MHC I) peptide loading complex forms reversible disulfide-linked heterodimers with TAPBP as part of its protein folding chaperone activity. This is essential to assist the dynamic assembly of the MHC I complex with high affinity antigens in the endoplasmic reticulum. Post-translationally, phosphorylated. In terms of tissue distribution, in caput epididymal spermatozoa, detected in the head, mid and principal pieces. In cauda epididymal spermatozoa detected only in the acrosome (at protein level).

Its subcellular location is the endoplasmic reticulum. The protein localises to the endoplasmic reticulum lumen. The protein resides in the melanosome. The catalysed reaction is Catalyzes the rearrangement of -S-S- bonds in proteins.. Its activity is regulated as follows. Seems to be inhibited by acidic phospholipids. Protein disulfide isomerase that catalyzes the formation, isomerization, and reduction or oxidation of disulfide bonds in client proteins and functions as a protein folding chaperone. Core component of the major histocompatibility complex class I (MHC I) peptide loading complex where it functions as an essential folding chaperone for TAPBP. Through TAPBP, assists the dynamic assembly of the MHC I complex with high affinity antigens in the endoplasmic reticulum. Therefore, plays a crucial role in the presentation of antigens to cytotoxic T cells in adaptive immunity. This Rattus norvegicus (Rat) protein is Protein disulfide-isomerase A3 (Pdia3).